A 414-amino-acid polypeptide reads, in one-letter code: 2,3-diketo-5-methylthiopentyl-1-phosphate enolase (414 aa).

The active-site Proton acceptor is K99. Substrate-binding positions include K148, 174 to 177 (KDDE), H265, G338, and 360 to 361 (GG). Residues K174, D176, and E177 each contribute to the Mg(2+) site. K174 is subject to N6-carboxylysine.

This sequence belongs to the RuBisCO large chain family. Type IV subfamily. Homodimer. Requires Mg(2+) as cofactor.

The catalysed reaction is 5-methylsulfanyl-2,3-dioxopentyl phosphate = 2-hydroxy-5-methylsulfanyl-3-oxopent-1-enyl phosphate. It participates in amino-acid biosynthesis; L-methionine biosynthesis via salvage pathway; L-methionine from S-methyl-5-thio-alpha-D-ribose 1-phosphate: step 3/6. In terms of biological role, catalyzes the enolization of 2,3-diketo-5-methylthiopentyl-1-phosphate (DK-MTP-1-P) into 2-hydroxy-3-keto-5-methylthiopentenyl-1-phosphate (HK-MTPenyl-1-P). This chain is 2,3-diketo-5-methylthiopentyl-1-phosphate enolase, found in Bacillus anthracis (strain CDC 684 / NRRL 3495).